The following is a 9439-amino-acid chain: Extracellular matrix-binding protein ebh (9439 aa).

30 consecutive FIVAR domains span residues 1815 to 1871, 1901 to 1957, 1985 to 2041, 2071 to 2127, 2155 to 2211, 2241 to 2297, 2325 to 2381, 2411 to 2467, 2488 to 2551, 2581 to 2638, 2665 to 2720, 2748 to 2804, 2832 to 2888, 2918 to 2974, 3002 to 3058, 3088 to 3144, 3172 to 3228, 3258 to 3314, 3335 to 3398, 3428 to 3484, 3512 to 3567, 3595 to 3650, 3678 to 3733, 3802 to 3860, 3928 to 3983, 4056 to 4114, 4182 to 4240, 4308 to 4365, 4433 to 4491, and 4559 to 4617; these read ARRR…VNSA, AKEQ…INDA, AYDT…VRDA, AKKR…ITSE, AYNK…VTQA, AKNR…ISSE, AYNK…VEDA, AKEK…ITEN, DTTS…VNNA, ARNR…STEI, AKNQ…IRTN, AKTA…VSDE, AYNQ…VNNA, AKEQ…ISNA, AYNQ…VTAA, AKQQ…ITNE, AYNQ…VAQA, AKNQ…ISDE, DTTE…VNNA, ARLN…ITTE, AKTA…IKTN, IKRQ…VKES, AKNR…IRQN, SMTA…IDQK, AMTQ…LDPA, AMQA…VNQK, SMGT…VDNA, AMHT…INQK, VMEQ…IEQA, and SMQT…IDQT. Basic and acidic residues predominate over residues 2495 to 2507; sequence EVRKLSRRGDTNN. A disordered region spans residues 2495 to 2514; sequence EVRKLSRRGDTNNKKPSSVS. Residues 2925 to 2938 show a composition bias toward polar residues; it reads AVDQVPSTEGMTQQ. Residues 2925 to 2951 form a disordered region; the sequence is AVDQVPSTEGMTQQTKDDYNSKQQAAQ. The tract at residues 4649-4674 is disordered; the sequence is GYLNDPQKSGEESLVNGSNTRSEVEE. 14 consecutive FIVAR domains span residues 4685-4743, 4811-4869, 4937-4995, 5063-5115, 5189-5246, 5314-5372, 5440-5498, 5566-5624, 5692-5750, 5818-5875, 5943-6000, 6068-6126, 6194-6252, and 6320-6378; these read AMKQ…IEQK, AMQA…IEQA, AMSN…IEQA, AMEA…VLDK, AMLG…INQL, LMGA…VTTA, AMGE…IDQA, AMKK…ITNA, AMKQ…IADT, DMST…LQDL, AMKA…IKQA, KMEE…INRT, AMQQ…IQAI, and EMGT…IADA. Polar residues predominate over residues 5699 to 5712; sequence QVNQDDQISNSSPF. Residues 5699 to 5719 form a disordered region; it reads QVNQDDQISNSSPFINEDSDK. The segment at 6413-6434 is disordered; it reads NNSQRQSEHDEINSAPSRTEVS. FIVAR domains follow at residues 6446–6504, 6572–6630, 6698–6755, 6823–6877, 6949–7007, 7075–7133, 7201–7259, 7327–7384, 7452–7510, 7578–7636, 7704–7762, 7830–7888, 7956–8010, 8078–8137, 8205–8264, 8332–8391, 8459–8518, and 8587–8643; these read AMRQ…IEDA, AMKA…INRA, SMNQ…IDQA, TMKA…ANDE, AMKK…INTI, SMNT…VERA, DMKK…IENA, AMKH…IKQL, AMEN…IEHA, AMKA…INSI, AMET…VDIV, AMKS…VRQA, VMGK…TKQA, IMGE…IDTF, AMKS…IQGL, AMKD…VLGL, KMKL…IQHL, and AMQG…ANII. A helical membrane pass occupies residues 9306–9324; sequence TVGVITLTGLLSSFWLVLA. Composition is skewed to basic and acidic residues over residues 9363–9375, 9386–9395, and 9404–9413; these read DKEE…DKHS, EKQLSEEDIH, and QNSDNKDTKQ. A disordered region spans residues 9363-9439; the sequence is DKEEQIQNDD…VVKTKKRSKK (77 aa). Basic residues predominate over residues 9414–9439; sequence KKVTSKKKKTPQSTKKVVKTKKRSKK.

It localises to the cell membrane. This is Extracellular matrix-binding protein ebh (ebh) from Staphylococcus epidermidis (strain ATCC 12228 / FDA PCI 1200).